The primary structure comprises 379 residues: Reducing end xylose-releasing exo-oligoxylanase (379 aa).

E66 (proton donor) is an active-site residue. The Proton acceptor role is filled by D259.

The protein belongs to the glycosyl hydrolase 8 (cellulase D) family.

The enzyme catalyses Hydrolysis of (1-&gt;4)-beta-D-xylose residues from the reducing end of oligosaccharides.. Hydrolyzes xylooligosaccharides with a degree of polymerization of greater than or equal to 3, releasing xylose from the reducing end. Has low activity on birchwood xylan, oat spelt xylan and arabinoxylan. This is Reducing end xylose-releasing exo-oligoxylanase from Bifidobacterium adolescentis (strain ATCC 15703 / DSM 20083 / NCTC 11814 / E194a).